The chain runs to 516 residues: Squalene epoxidase 5 (516 aa).

The next 2 helical transmembrane spans lie at 3-23 and 45-65; these read FTNV…VFYV and ATDV…YALA. FAD is bound by residues 55-56, 75-76, Arg-83, Phe-88, Arg-156, Val-172, Asp-335, and Met-348; these read VG and ER. Residues 446-466 traverse the membrane as a helical segment; sequence LIYHLCAITLSSIGHLLSPFP.

The protein belongs to the squalene monooxygenase family. FAD serves as cofactor. In terms of tissue distribution, expressed in seedlings, leaves, stems and inflorescences. Detected in siliques.

The protein resides in the membrane. The catalysed reaction is squalene + reduced [NADPH--hemoprotein reductase] + O2 = (S)-2,3-epoxysqualene + oxidized [NADPH--hemoprotein reductase] + H2O + H(+). The protein operates within terpene metabolism; lanosterol biosynthesis; lanosterol from farnesyl diphosphate: step 2/3. Functionally, catalyzes the stereospecific oxidation of squalene to (S)-2,3-epoxysqualene, and is considered to be a rate-limiting enzyme in steroid biosynthesis. The sequence is that of Squalene epoxidase 5 (SQE5) from Arabidopsis thaliana (Mouse-ear cress).